We begin with the raw amino-acid sequence, 361 residues long: AP2/ERF and B3 domain-containing transcription repressor TEM1 (361 aa).

The disordered stretch occupies residues 1–73 (MEYSCVDDSS…SRKLPSSKYK (73 aa)). The segment covering 9–27 (SSTTSESLSISTTPKPTTT) has biased composition (low complexity). A DNA-binding region (AP2/ERF) is located at residues 71–126 (KYKGVVPQPNGRWGAQIYEKHQRVWLGTFNEEEEAASSYDIAVRRFRGRDAVTNFK). Residues 195-306 (FEKTVTPSDV…QLYIHWKVRS (112 aa)) constitute a DNA-binding region (TF-B3).

The protein belongs to the AP2/ERF transcription factor family. RAV subfamily. As to quaternary structure, interacts with FT. Expressed in leaves.

It is found in the nucleus. Functionally, transcriptional repressor of flowering time on long day plants. Acts directly on FT expression by binding 5'-CAACA-3' and 5'-CACCTG-3 sequences. Functionally redundant with TEM2. This Arabidopsis thaliana (Mouse-ear cress) protein is AP2/ERF and B3 domain-containing transcription repressor TEM1 (TEM1).